Reading from the N-terminus, the 132-residue chain is Small ribosomal subunit protein uS8 (132 aa).

It belongs to the universal ribosomal protein uS8 family. Part of the 30S ribosomal subunit. Contacts proteins S5 and S12.

Its function is as follows. One of the primary rRNA binding proteins, it binds directly to 16S rRNA central domain where it helps coordinate assembly of the platform of the 30S subunit. The polypeptide is Small ribosomal subunit protein uS8 (Brucella melitensis biotype 1 (strain ATCC 23456 / CCUG 17765 / NCTC 10094 / 16M)).